Reading from the N-terminus, the 302-residue chain is uncharacterized protein (302 aa).

The tract at residues 1–24 (MTEISELASSSQKPEKTKYNLPKP) is disordered.

This is an uncharacterized protein from Schizosaccharomyces pombe (strain 972 / ATCC 24843) (Fission yeast).